The following is a 338-amino-acid chain: Taste receptor type 2 member 39 (338 aa).

Residues Met-1–Ser-30 lie on the Extracellular side of the membrane. A helical membrane pass occupies residues Pro-31 to Ala-51. The Cytoplasmic segment spans residues Asn-52–Arg-74. The chain crosses the membrane as a helical span at residues Ile-75–Thr-95. Residues Ile-96–Ser-116 lie on the Extracellular side of the membrane. Residues Phe-117–Val-137 traverse the membrane as a helical segment. Residues Lys-138–Gly-156 lie on the Cytoplasmic side of the membrane. The helical transmembrane segment at Leu-157–Ile-177 threads the bilayer. The Extracellular segment spans residues Asn-178–Ser-205. Asn-194 is a glycosylation site (N-linked (GlcNAc...) asparagine). A helical membrane pass occupies residues Val-206–Leu-226. Residues Ala-227–Lys-262 are Cytoplasmic-facing. The chain crosses the membrane as a helical span at residues Ala-263–Ser-283. At Asn-284–Leu-291 the chain is on the extracellular side. Residues Trp-292 to Ile-312 form a helical membrane-spanning segment. The Cytoplasmic segment spans residues Lys-313–Leu-338.

Belongs to the G-protein coupled receptor T2R family.

It localises to the membrane. Functionally, receptor that may play a role in the perception of bitterness and is gustducin-linked. May play a role in sensing the chemical composition of the gastrointestinal content. The activity of this receptor may stimulate alpha gustducin, mediate PLC-beta-2 activation and lead to the gating of TRPM5. This Papio hamadryas (Hamadryas baboon) protein is Taste receptor type 2 member 39 (TAS2R39).